The primary structure comprises 355 residues: BAG family molecular chaperone regulator 1 (355 aa).

Residues 1–112 form a disordered region; that stretch reads MAGRSAARRP…KNVTGTQVEE (112 aa). Residues 26-39 show a composition bias toward basic and acidic residues; sequence PAREPRQSESRAER. 2 stretches are compositionally biased toward polar residues: residues 80-91 and 102-111; these read SSQSEKVGSSSR and SKNVTGTQVE. 7 repeat units span residues 103 to 108, 111 to 116, 117 to 122, 123 to 128, 129 to 134, 141 to 146, and 147 to 152. The interval 111–209 is 7 X 6 AA tandem repeat of E-E-X(4); it reads EEVTKIEEAT…LIFKGKSLKE (99 aa). The disordered stretch occupies residues 132-151; sequence TQTDNMAKTEEMVQTEEMET. In terms of domain architecture, Ubiquitin-like spans 154 to 234; the sequence is LSVIVTHSNE…VMLIGEKSNP (81 aa). The interval 182–229 is interaction with HSPA8; that stretch reads DLAQLVEEATGVPLPFQKLIFKGKSLKEMETPLSALGMQNGCRVMLIG. The segment at 226-355 is interaction with PPP1R15A; the sequence is MLIGEKSNPE…LQSTNLALAE (130 aa). The BAG domain occupies 256–336; sequence HLQELNKELS…VFLAECDTVE (81 aa).

Homodimer. Forms a heteromeric complex with HSP70/HSC70. Binds to the ATPase domain of HSP/HSC70 chaperones. Interacts with NR3C1. Interacts with the N-terminal region of MAPRE2. Interacts with PPP1R15A. Interacts with BCL2 in an ATP-dependent manner. Interacts with SIAH1, HSPA8 (via NBD), HSPA1A (via NBD) and HSPA1B (via NBD). Interacts with SIAH2. Interacts with ESR1; the interaction is promoted in the absence of estradiol (17-beta-estradiol/E2). Ubiquitinated; mediated by SIAH1 or SIAH2 and leading to its subsequent proteasomal degradation. In terms of tissue distribution, isoform 2 is expressed in the heart, lung, kidney and spinal cord. Isoform 1 and isoform 2 are expressed in hematopoietic cell lines. The levels of isoform 2 are relatively constant in all the cell lines examined while the levels of isoform 1 are more variable (at protein level). Isoform 1 is expressed in the lung and kidney. Isoform 2 is expressed in various tissues, with highest levels in testis and stomach.

Its subcellular location is the nucleus. It localises to the cytoplasm. Co-chaperone for HSP70 and HSC70 chaperone proteins. Acts as a nucleotide-exchange factor (NEF) promoting the release of ADP from the HSP70 and HSC70 proteins thereby triggering client/substrate protein release. Nucleotide release is mediated via its binding to the nucleotide-binding domain (NBD) of HSPA8/HSC70 where as the substrate release is mediated via its binding to the substrate-binding domain (SBD) of HSPA8/HSC70. Inhibits the pro-apoptotic function of PPP1R15A, and has anti-apoptotic activity. Markedly increases the anti-cell death function of BCL2 induced by various stimuli. Involved in the STUB1-mediated proteasomal degradation of ESR1 in response to age-related circulating estradiol (17-beta-estradiol/E2) decline, thereby promotes neuronal apoptosis in response to ischemic reperfusion injury. In Mus musculus (Mouse), this protein is BAG family molecular chaperone regulator 1 (Bag1).